The sequence spans 795 residues: Inactive N-acetylated-alpha-linked acidic dipeptidase-like protein 2 (795 aa).

Residues methionine 1–asparagine 38 form a disordered region. Over methionine 1 to asparagine 121 the chain is Cytoplasmic. Serine 92 carries the phosphoserine modification. The chain crosses the membrane as a helical; Signal-anchor for type II membrane protein span at residues phenylalanine 122–isoleucine 142. At glycine 143 to asparagine 795 the chain is on the extracellular side. Asparagine 295, asparagine 373, asparagine 534, and asparagine 759 each carry an N-linked (GlcNAc...) asparagine glycan.

This sequence belongs to the peptidase M28 family. M28B subfamily. As to expression, expressed at higher level in kidney and placenta. In embryo, it is mainly confined to duodenal and stomach endoderm, mesonephros, metanephros and pancreas.

The protein resides in the membrane. May be catalytically inactive. In Homo sapiens (Human), this protein is Inactive N-acetylated-alpha-linked acidic dipeptidase-like protein 2 (NAALADL2).